Reading from the N-terminus, the 138-residue chain is MAEEHQNRLQNAVDSMVKSLERDNIRKMQGKMFRCSAQCCEDNGASMQQVHHCIERCHTPLAQAQSLVTTELERFQNRLSRCTMNCSDQAKDAFDSGSKEAQVKAQLEGCVIKCAEEHMNLIPSMTKKLKDALAQADK.

The protein belongs to the FAM136 family.

The chain is Protein FAM136A (fam136a) from Xenopus laevis (African clawed frog).